A 262-amino-acid polypeptide reads, in one-letter code: Acyl-[acyl-carrier-protein]--UDP-N-acetylglucosamine O-acyltransferase (262 aa).

This sequence belongs to the transferase hexapeptide repeat family. LpxA subfamily. In terms of assembly, homotrimer.

It localises to the cytoplasm. It carries out the reaction a (3R)-hydroxyacyl-[ACP] + UDP-N-acetyl-alpha-D-glucosamine = a UDP-3-O-[(3R)-3-hydroxyacyl]-N-acetyl-alpha-D-glucosamine + holo-[ACP]. The protein operates within glycolipid biosynthesis; lipid IV(A) biosynthesis; lipid IV(A) from (3R)-3-hydroxytetradecanoyl-[acyl-carrier-protein] and UDP-N-acetyl-alpha-D-glucosamine: step 1/6. Involved in the biosynthesis of lipid A, a phosphorylated glycolipid that anchors the lipopolysaccharide to the outer membrane of the cell. This is Acyl-[acyl-carrier-protein]--UDP-N-acetylglucosamine O-acyltransferase from Yersinia enterocolitica serotype O:8 / biotype 1B (strain NCTC 13174 / 8081).